A 162-amino-acid polypeptide reads, in one-letter code: Transcription antitermination protein RfaH (162 aa).

It belongs to the RfaH family. In terms of assembly, interacts with both the nontemplate DNA and the RNA polymerase (RNAP). Monomer in solution.

Functionally, enhances distal genes transcription elongation in a specialized subset of operons that encode extracytoplasmic components. RfaH is recruited into a multi-component RNA polymerase complex by the ops element, which is a short conserved DNA sequence located downstream of the main promoter of these operons. Once bound, RfaH suppresses pausing and inhibits Rho-dependent and intrinsic termination at a subset of sites. Termination signals are bypassed, which allows complete synthesis of long RNA chains. Enhances expression of several operons involved in synthesis of lipopolysaccharides, exopolysaccharides, hemolysin, and sex factor. Also negatively controls expression and surface presentation of AG43 and possibly another AG43-independent factor that mediates cell-cell interactions and biofilm formation. This Escherichia coli (strain K12) protein is Transcription antitermination protein RfaH.